We begin with the raw amino-acid sequence, 771 residues long: Sarcolemmal membrane-associated protein (771 aa).

A necessary for targeting to centrosomes region spans residues 1 to 163; the sequence is MPSALAIFTC…AANTPSMYSQ (163 aa). Over 1–745 the chain is Cytoplasmic; the sequence is MPSALAIFTC…EKGNNNKPWP (745 aa). Residues 28–85 form the FHA domain; that stretch reads IKIGRSVARCRPAQNNATFDCKVLSRNHALVWFDHKTGKFYLQDTKSSNGTFINSQRL. S148 bears the Phosphoserine mark. 2 coiled-coil regions span residues 167–202 and 230–381; these read QLSQ…ASDT and NQTE…QEHL. Basic and acidic residues predominate over residues 420–429; that stretch reads ENQARAKESD. The segment at 420-450 is disordered; it reads ENQARAKESDLSDTLSPSKEKSSDDTTDAQM. Phosphoserine occurs at positions 431 and 435. Residues 452-742 adopt a coiled-coil conformation; that stretch reads EQDLNESLAK…LLQEKGNNNK (291 aa). Residues 746–766 traverse the membrane as a helical; Anchor for type IV membrane protein segment; that stretch reads WMPMLAALVAVTAIVLYVPGL. Topologically, residues 767–771 are extracellular; sequence ARASP.

The protein belongs to the SLMAP family. In terms of assembly, homodimer. Interacts with myosin. Interacts with SIKE1 and both associate with the STRIPAK core complex composed of PP2A catalytic and scaffolding subunits, the striatins (PP2A regulatory subunits), the striatin-associated proteins MOB4, STRIP1 and STRIP2, PDCD10 and members of the STE20 kinases, such as STK24 and STK26. Interacts (via FHA domain) with STK3 (when phosphorylated); the interaction associates STK3 with the STRIPAK complex. Expressed in heart (at protein level). Expressed in heart, skeletal muscle, smooth muscle, kidney, spleen, pancreas and brain.

It is found in the cell membrane. The protein resides in the sarcolemma. The protein localises to the cytoplasm. Its subcellular location is the myofibril. It localises to the sarcomere. It is found in the m line. The protein resides in the z line. The protein localises to the cytoskeleton. Its subcellular location is the microtubule organizing center. It localises to the centrosome. It is found in the endoplasmic reticulum membrane. The protein resides in the mitochondrion membrane. Associates with the striatin-interacting phosphatase and kinase (STRIPAK) core complex, forming the extended (SIKE1:SLMAP)STRIPAK complex. The (SIKE1:SLMAP)STRIPAK complex dephosphorylates STK3 leading to the inhibition of Hippo signaling and the control of cell growth. May play a role during myoblast fusion. This chain is Sarcolemmal membrane-associated protein (SLMAP), found in Oryctolagus cuniculus (Rabbit).